The following is a 225-amino-acid chain: Probable methylthioribulose-1-phosphate dehydratase (225 aa).

C86 lines the substrate pocket. H104 and H106 together coordinate Zn(2+). E127 serves as the catalytic Proton donor/acceptor. Position 183 (H183) interacts with Zn(2+).

It belongs to the aldolase class II family. MtnB subfamily. Zn(2+) serves as cofactor.

It is found in the cytoplasm. It catalyses the reaction 5-(methylsulfanyl)-D-ribulose 1-phosphate = 5-methylsulfanyl-2,3-dioxopentyl phosphate + H2O. It participates in amino-acid biosynthesis; L-methionine biosynthesis via salvage pathway; L-methionine from S-methyl-5-thio-alpha-D-ribose 1-phosphate: step 2/6. Its function is as follows. Catalyzes the dehydration of methylthioribulose-1-phosphate (MTRu-1-P) into 2,3-diketo-5-methylthiopentyl-1-phosphate (DK-MTP-1-P). The chain is Probable methylthioribulose-1-phosphate dehydratase from Leishmania braziliensis.